Consider the following 267-residue polypeptide: Putative N-acetylmuramoyl-L-alanine amidase RC0497 (267 aa).

Positions methionine 1 to proline 25 are disordered. Polar residues predominate over residues asparagine 10–asparagine 19. An N-acetylmuramoyl-L-alanine amidase domain is found at threonine 33–glycine 141.

The protein belongs to the N-acetylmuramoyl-L-alanine amidase 2 family.

The protein localises to the secreted. It catalyses the reaction Hydrolyzes the link between N-acetylmuramoyl residues and L-amino acid residues in certain cell-wall glycopeptides.. This Rickettsia conorii (strain ATCC VR-613 / Malish 7) protein is Putative N-acetylmuramoyl-L-alanine amidase RC0497.